The sequence spans 474 residues: MAGKTLYDKLWDSHLVKQRDDGSALIYIDRHIIHEVTSPQAFEGLRLAKRKPWRIDSIIATPDHNVPTTSERKGGIDAIEDQVSRLQVQTLDDNCDEYGITEFKMNDPRQGIVHVIGPEQGATLPGMSVVCGDSHTSTHGAFGALAHGIGTSEVEHVLATQCLVAKKMKNMLVSVEGQLPFGVTAKDIVLAVIGKIGTAGGNGYAIEFAGSAIRDLSIEGRMTICNMSIEAGARVGMVATDEKTVEYVKGRPFAPKGAEWDLAVEAWKDLVSDADAVFDTVVRLDAAQIKPQVSWGTSPEMVLAVDQNVPDPAQEPDLVKRGSIERALKYMGLKANQPITDIQLDRVFIGSCTNSRIEDLRAAADVAKGRKVAATIKQAIVVPGSGLIKEQAEKEGLDKVFIEAGFEWREPGCSMCLAMNPDRLGSGEHCASTSNRNFEGRQGAGGRTHLVSPAMAAAAAVNGRFIDVRDLIQL.

[4Fe-4S] cluster contacts are provided by Cys352, Cys413, and Cys416.

Belongs to the aconitase/IPM isomerase family. LeuC type 1 subfamily. As to quaternary structure, heterodimer of LeuC and LeuD. [4Fe-4S] cluster is required as a cofactor.

It carries out the reaction (2R,3S)-3-isopropylmalate = (2S)-2-isopropylmalate. The protein operates within amino-acid biosynthesis; L-leucine biosynthesis; L-leucine from 3-methyl-2-oxobutanoate: step 2/4. In terms of biological role, catalyzes the isomerization between 2-isopropylmalate and 3-isopropylmalate, via the formation of 2-isopropylmaleate. The sequence is that of 3-isopropylmalate dehydratase large subunit from Pseudomonas savastanoi pv. phaseolicola (strain 1448A / Race 6) (Pseudomonas syringae pv. phaseolicola (strain 1448A / Race 6)).